A 506-amino-acid chain; its full sequence is Lysine--tRNA ligase (506 aa).

Residues Glu416 and Glu423 each coordinate Mg(2+).

It belongs to the class-II aminoacyl-tRNA synthetase family. Homodimer. It depends on Mg(2+) as a cofactor.

It is found in the cytoplasm. It carries out the reaction tRNA(Lys) + L-lysine + ATP = L-lysyl-tRNA(Lys) + AMP + diphosphate. The protein is Lysine--tRNA ligase of Baumannia cicadellinicola subsp. Homalodisca coagulata.